The following is a 508-amino-acid chain: MGLPWYRVHTVVLNDPGRLLAVHIMHTALVAGWAGSMALYELAVFDPSDPVLDPMWRQGMFVIPFMTRLGITNSWGGWSITGGTVTNPGIWSYEGVAGSHILFSGLCFLAAIWHWVYWDLAIFSDERTGKPSLDLPKIFGIHLFLSGLACFGFGAFHVTGLYGPGIWVSDPYGLTGEVQPVNPAWGVEGFDPFVPGGIASHHIAAGTLGILAGLFHLSVRPPQRLYKGLRMGNIETVLSSSIAAVFFAAFVVAGTMWYGSATTPIELFGPTRYQWDQGYFQQEIYRRVGAGLAKNQSLSEAWSKIPEKLAFYDYIGNNPAKGGLFRAGSMDSGDGIAVGWLGHPIFRDKEGRELFVRRMPTFFETFPVVLVDGDGIVRADVPFRRAESKYSVEQVGVTIEFYGGELNGVSYSDPATVKKYARRAQLGEIFELDRATLKSDGVFRSSPRGWFTFGHASFALLFFFGHIWHGARTLFRDVFAGIDPDLDTQVEFGAFQKLGDPTTRRQAV.

The next 6 helical transmembrane spans lie at 21 to 36 (AVHIMHTALVAGWAGS), 101 to 115 (ILFSGLCFLAAIWHW), 140 to 156 (GIHLFLSGLACFGFGAF), 203 to 218 (IAAGTLGILAGLFHLS), 237 to 252 (VLSSSIAAVFFAAFVV), and 457 to 472 (SFALLFFFGHIWHGAR).

The protein belongs to the PsbB/PsbC family. PsbB subfamily. In terms of assembly, PSII is composed of 1 copy each of membrane proteins PsbA, PsbB, PsbC, PsbD, PsbE, PsbF, PsbH, PsbI, PsbJ, PsbK, PsbL, PsbM, PsbT, PsbX, PsbY, PsbZ, Psb30/Ycf12, at least 3 peripheral proteins of the oxygen-evolving complex and a large number of cofactors. It forms dimeric complexes. Requires Binds multiple chlorophylls. PSII binds additional chlorophylls, carotenoids and specific lipids. as cofactor.

The protein resides in the plastid. Its subcellular location is the chloroplast thylakoid membrane. Functionally, one of the components of the core complex of photosystem II (PSII). It binds chlorophyll and helps catalyze the primary light-induced photochemical processes of PSII. PSII is a light-driven water:plastoquinone oxidoreductase, using light energy to abstract electrons from H(2)O, generating O(2) and a proton gradient subsequently used for ATP formation. The chain is Photosystem II CP47 reaction center protein from Oenothera biennis (German evening primrose).